The following is a 297-amino-acid chain: MDKQEAKHINMPSPSACEHKSVEAYLFIDPLCKDCWEIEPFIIKLWLEYGKYFSIRHIVTGKVDGTNASSHKWNKPANIRFVWEKTTSLHGFSCDGKVHMQEASSTPYLVSMAIKAAELQGRKAGSKFLRKLQEYIFLENVSNPDCELLLACAKDSDIDVEEFKKDLYSASAKKAFQCDLKFTNEMHITEIPSLVFFHANSDEEGIKIAGTYSYDVYVQLLKELVKCEIEPEPLPPLEVLLEATQFISSKEVAFIYDCSKQEIERELKKLQLKRKVQMIDVKCERYWKWIAKEKDLV.

The protein belongs to the SpxH family. As to quaternary structure, interacts with Spx.

The protein resides in the cytoplasm. In terms of biological role, adapter protein required for efficient degradation of Spx by ClpXP under non-stress conditions. Interaction with Spx stabilizes Spx and exposes the C-terminus of Spx for recognition and proteolysis by ClpXP. This is ClpXP adapter protein SpxH from Bacillus thuringiensis subsp. konkukian (strain 97-27).